Consider the following 570-residue polypeptide: Sorting nexin-41 (570 aa).

Disordered stretches follow at residues 1 to 31 and 81 to 115; these read MSDF…PSAS and FDDG…TTAS. A compositionally biased stretch (polar residues) spans 84 to 101; sequence GSNSFSATPTASITNQND. The 139-residue stretch at 98-236 folds into the PX domain; it reads NQNDTAHEAT…RFLDPHASWS (139 aa). The a 1,2-diacyl-sn-glycero-3-phospho-(1D-myo-inositol-3-phosphate) site is built by Arg-153, Ser-155, Lys-179, and Arg-202. The tract at residues 429-498 is disordered; the sequence is DSQRINDALG…ASRRQGIGKT (70 aa). Positions 440–454 are enriched in polar residues; it reads TRSNNGPSTTNSGEQ. Residues 455–464 show a composition bias toward low complexity; it reads PSASPAPKKS.

It belongs to the sorting nexin family.

Its subcellular location is the endosome membrane. It localises to the endomembrane system. May be required for cytoplasm to vacuole transport (Cvt) and pexophagy. This is Sorting nexin-41 (SNX41) from Yarrowia lipolytica (strain CLIB 122 / E 150) (Yeast).